The primary structure comprises 511 residues: Apolipoprotein N-acyltransferase (511 aa).

6 helical membrane passes run 7 to 29 (PGWPGHLLALAAGALTPLALAPF), 58 to 78 (GWWYGFGAFGAGTSWIYVSIH), 90 to 110 (LLMLGFTAGVAFFFALPAWLW), 125 to 145 (LAFAALWLALELFRSWFLTGF), 163 to 183 (VPVGGVWLSSFVIALSAALLV), and 192 to 212 (GASLLLGLVLLLGPWAAGLYL). The CN hydrolase domain occupies 230–470 (IQGNIAQELK…QGILRGEVIP (241 aa)). The active-site Proton acceptor is Glu-269. The active site involves Lys-330. The Nucleophile role is filled by Cys-382. Residues 482–502 (VWPLAGLAGVLLLWALLGRQL) traverse the membrane as a helical segment.

Belongs to the CN hydrolase family. Apolipoprotein N-acyltransferase subfamily.

It localises to the cell inner membrane. The enzyme catalyses N-terminal S-1,2-diacyl-sn-glyceryl-L-cysteinyl-[lipoprotein] + a glycerophospholipid = N-acyl-S-1,2-diacyl-sn-glyceryl-L-cysteinyl-[lipoprotein] + a 2-acyl-sn-glycero-3-phospholipid + H(+). Its pathway is protein modification; lipoprotein biosynthesis (N-acyl transfer). Its function is as follows. Catalyzes the phospholipid dependent N-acylation of the N-terminal cysteine of apolipoprotein, the last step in lipoprotein maturation. This chain is Apolipoprotein N-acyltransferase, found in Pseudomonas aeruginosa (strain LESB58).